A 172-amino-acid chain; its full sequence is Ribosome maturation factor RimM (172 aa).

The region spanning 95-168 is the PRC barrel domain; sequence DDGEFYYHEI…RVDVEILEGL (74 aa).

Belongs to the RimM family. As to quaternary structure, binds ribosomal protein uS19.

It localises to the cytoplasm. Its function is as follows. An accessory protein needed during the final step in the assembly of 30S ribosomal subunit, possibly for assembly of the head region. Essential for efficient processing of 16S rRNA. May be needed both before and after RbfA during the maturation of 16S rRNA. It has affinity for free ribosomal 30S subunits but not for 70S ribosomes. The protein is Ribosome maturation factor RimM of Streptococcus pneumoniae (strain P1031).